The following is a 498-amino-acid chain: ATP synthase subunit beta, chloroplastic (498 aa).

172-179 (GGAGVGKT) provides a ligand contact to ATP.

The protein belongs to the ATPase alpha/beta chains family. As to quaternary structure, F-type ATPases have 2 components, CF(1) - the catalytic core - and CF(0) - the membrane proton channel. CF(1) has five subunits: alpha(3), beta(3), gamma(1), delta(1), epsilon(1). CF(0) has four main subunits: a(1), b(1), b'(1) and c(9-12).

Its subcellular location is the plastid. The protein localises to the chloroplast thylakoid membrane. The enzyme catalyses ATP + H2O + 4 H(+)(in) = ADP + phosphate + 5 H(+)(out). Its function is as follows. Produces ATP from ADP in the presence of a proton gradient across the membrane. The catalytic sites are hosted primarily by the beta subunits. This is ATP synthase subunit beta, chloroplastic from Gossypium barbadense (Sea Island cotton).